We begin with the raw amino-acid sequence, 377 residues long: Erythronate-4-phosphate dehydrogenase (377 aa).

Serine 45 and threonine 66 together coordinate substrate. NAD(+)-binding residues include aspartate 146 and threonine 175. Residue arginine 208 is part of the active site. Residue aspartate 232 participates in NAD(+) binding. Glutamate 237 is a catalytic residue. The active-site Proton donor is histidine 254. Glycine 257 is an NAD(+) binding site. Tyrosine 258 lines the substrate pocket.

Belongs to the D-isomer specific 2-hydroxyacid dehydrogenase family. PdxB subfamily. In terms of assembly, homodimer.

It is found in the cytoplasm. It catalyses the reaction 4-phospho-D-erythronate + NAD(+) = (R)-3-hydroxy-2-oxo-4-phosphooxybutanoate + NADH + H(+). It functions in the pathway cofactor biosynthesis; pyridoxine 5'-phosphate biosynthesis; pyridoxine 5'-phosphate from D-erythrose 4-phosphate: step 2/5. Functionally, catalyzes the oxidation of erythronate-4-phosphate to 3-hydroxy-2-oxo-4-phosphonooxybutanoate. The polypeptide is Erythronate-4-phosphate dehydrogenase (Sodalis glossinidius (strain morsitans)).